The chain runs to 1156 residues: Mastermind-like protein 2 (1156 aa).

Positions 81 to 165 (QHGQGARKAG…PPASTPGDQR (85 aa)) are disordered. The segment covering 113–122 (PAASQAAATA) has biased composition (low complexity). Polar residues predominate over residues 153–165 (EQQPPASTPGDQR). A Phosphoserine modification is found at serine 175. 7 disordered regions span residues 340-359 (FNID…SLPM), 369-506 (SPGL…GSGQ), 531-630 (QQKP…QQQQ), 658-680 (QQQQ…QPLL), 705-743 (YQVS…GYMN), 784-820 (IAPQ…YSGG), and 1059-1100 (LPNL…FQGT). Polar residues-rich tracts occupy residues 344 to 354 (LGQQSQRSTPR), 371 to 380 (GLTQGPSGSP), 393 to 419 (MANS…TGSG), and 428 to 437 (QEVSHAQQLK). The span at 440–470 (AANRQQHARMQQHQQQHQPTNWSALPSSAGP) shows a compositional bias: low complexity. Polar residues-rich tracts occupy residues 484 to 496 (SFGQ…QSSP), 532 to 543 (QKPQDLSRSFIN), and 563 to 587 (NSDQ…LHYT). Residues 588-630 (QQQQQQQQQQQQQQQQQQQQQQQQQQQQQQQQQQSSISAQQQQ) are compositionally biased toward low complexity. Low complexity-rich tracts occupy residues 706–725 (QVSQ…NTGP) and 733–743 (SNPNTGSGYMN). Residues 807 to 820 (NVGNMQPTAQYSGG) are compositionally biased toward polar residues.

It belongs to the mastermind family. Interacts through its N-terminal region with the ankyrin repeat region of the Notch proteins NOTCH1, NOTCH2, NOTCH3 and NOTCH4. Forms a DNA-binding complex with Notch proteins and RBPSUH/RBP-J kappa. Widely expressed with high levels detected in placenta, salivary gland and skeletal muscle.

It is found in the nucleus speckle. Its function is as follows. Acts as a transcriptional coactivator for NOTCH proteins. Has been shown to amplify NOTCH-induced transcription of HES1. Potentiates activation by NOTCH3 and NOTCH4 more efficiently than MAML1 or MAML3. In Homo sapiens (Human), this protein is Mastermind-like protein 2 (MAML2).